A 172-amino-acid polypeptide reads, in one-letter code: Large ribosomal subunit protein uL10 (172 aa).

The protein belongs to the universal ribosomal protein uL10 family. As to quaternary structure, part of the ribosomal stalk of the 50S ribosomal subunit. The N-terminus interacts with L11 and the large rRNA to form the base of the stalk. The C-terminus forms an elongated spine to which L12 dimers bind in a sequential fashion forming a multimeric L10(L12)X complex.

Its function is as follows. Forms part of the ribosomal stalk, playing a central role in the interaction of the ribosome with GTP-bound translation factors. This chain is Large ribosomal subunit protein uL10, found in Brucella suis (strain ATCC 23445 / NCTC 10510).